Consider the following 165-residue polypeptide: MSKSICSTGLRWLWVVVAVLIIDLGSKFLILQNFALGETVSLFPSLNLHYARNYGAAFSFLADSGGWQRWFFAGIAVGICVVLAVLMYRSKATQKLNNIAYALIIGGALGNLFDRLWHGFVVDMIDFYVGDWHFATFNLADSAICIGAALIVLEGFLPSSDKKTS.

The next 3 helical transmembrane spans lie at W12–Q32, W70–S90, and A102–V122. Active-site residues include D123 and D141. A helical membrane pass occupies residues F137 to L157.

This sequence belongs to the peptidase A8 family.

It localises to the cell inner membrane. It carries out the reaction Release of signal peptides from bacterial membrane prolipoproteins. Hydrolyzes -Xaa-Yaa-Zaa-|-(S,diacylglyceryl)Cys-, in which Xaa is hydrophobic (preferably Leu), and Yaa (Ala or Ser) and Zaa (Gly or Ala) have small, neutral side chains.. It functions in the pathway protein modification; lipoprotein biosynthesis (signal peptide cleavage). This protein specifically catalyzes the removal of signal peptides from prolipoproteins. This is Lipoprotein signal peptidase from Klebsiella aerogenes (strain ATCC 13048 / DSM 30053 / CCUG 1429 / JCM 1235 / KCTC 2190 / NBRC 13534 / NCIMB 10102 / NCTC 10006 / CDC 819-56) (Enterobacter aerogenes).